The following is a 426-amino-acid chain: MASLLGTSSSAAAAILASTPLSSRSCKPAVFSLFPSSGQSQGRKFYGGIRVPVKKGRSQFHVAISNVATEINLLKNRVRNLLEESQRPVYPFAAIVGQDEMKLCLLLNVIDPKIGGVMIMGDRGTGKSTTVRSLVDLLPEIKVISGDPFNSDPDDQEVMSAEVRDKLRSGQQLPISRTKINMVDLPLGATEDRVCGTIDIEKALTEGVKAFEPGLLAKANRGILYVDEVNLLDDHLVDVLLDSAASGWNTVEREGISISHPARFILIGSGNPEEGELRPQLLDRFGMHAQVGTVRDAELRVKIVEERARFDKNPKEFRESYKAEQEKLQNQIDSARNALSAVTIDHDLRVKISKVCAELNVDGLRGDIVTNRAARALAALKGRDKVTPEDIATVIPNCLRHRLRKDPLESIDSGVLVVEKFYEVFA.

The N-terminal 50 residues, 1–50, are a transit peptide targeting the chloroplast; that stretch reads MASLLGTSSSAAAAILASTPLSSRSCKPAVFSLFPSSGQSQGRKFYGGIR. Intrachain disulfides connect Cys104–Cys195 and Cys356–Cys398. 121–128 contributes to the ATP binding site; the sequence is GDRGTGKS.

This sequence belongs to the Mg-chelatase subunits D/I family. In terms of assembly, the magnesium chelatase complex is a heterotrimer consisting of subunits CHLI, CHLD and CHLH. In terms of tissue distribution, strongly expressed in young leaves and to a lesser extent in mature leaves.

It is found in the plastid. The protein resides in the chloroplast. The catalysed reaction is protoporphyrin IX + Mg(2+) + ATP + H2O = Mg-protoporphyrin IX + ADP + phosphate + 3 H(+). It functions in the pathway porphyrin-containing compound metabolism; chlorophyll biosynthesis. Redox regulation; active in reducing conditions, inactive in oxidizing conditions. Thioredoxins f and m mediate the reversible reductive activation of oxidized CHLI. In terms of biological role, involved in chlorophyll biosynthesis. Catalyzes the insertion of magnesium ion into protoporphyrin IX to yield Mg-protoporphyrin IX. The magnesium-chelatase is a complex of three subunits, CHLI, CHLD and CHLH. The reaction takes place in two steps, with an ATP-dependent activation followed by an ATP-dependent chelation step. The chain is Magnesium-chelatase subunit ChlI, chloroplastic (CHLI) from Nicotiana tabacum (Common tobacco).